A 496-amino-acid chain; its full sequence is Protein RepS (496 aa).

The DNA-binding element occupies 120-141 (SDILTTAIDLGFMPTLIIKSDK).

Essential for replication. In Streptococcus pyogenes, this protein is Protein RepS (repS).